The chain runs to 227 residues: 6,7-dimethyl-8-ribityllumazine synthase, chloroplastic (227 aa).

Residues 1–71 (MKSLASPPCL…LRSSFVQTAA (71 aa)) constitute a chloroplast transit peptide. Residues Phe-94, 128–130 (SFE), and 152–154 (AVI) each bind 5-amino-6-(D-ribitylamino)uracil. 157 to 158 (DT) contributes to the (2S)-2-hydroxy-3-oxobutyl phosphate binding site. The active-site Proton donor is His-160. Phe-185 is a binding site for 5-amino-6-(D-ribitylamino)uracil. Arg-199 contributes to the (2S)-2-hydroxy-3-oxobutyl phosphate binding site.

The protein belongs to the DMRL synthase family. In terms of assembly, oligomer forming an icosahedral capsid.

The protein resides in the plastid. Its subcellular location is the chloroplast. It catalyses the reaction (2S)-2-hydroxy-3-oxobutyl phosphate + 5-amino-6-(D-ribitylamino)uracil = 6,7-dimethyl-8-(1-D-ribityl)lumazine + phosphate + 2 H2O + H(+). Its pathway is cofactor biosynthesis; riboflavin biosynthesis; riboflavin from 2-hydroxy-3-oxobutyl phosphate and 5-amino-6-(D-ribitylamino)uracil: step 1/2. In terms of biological role, catalyzes the formation of 6,7-dimethyl-8-ribityllumazine by condensation of 5-amino-6-(D-ribitylamino)uracil with 3,4-dihydroxy-2-butanone 4-phosphate. This is the penultimate step in the biosynthesis of riboflavin. This Arabidopsis thaliana (Mouse-ear cress) protein is 6,7-dimethyl-8-ribityllumazine synthase, chloroplastic.